The sequence spans 52 residues: Small, acid-soluble spore protein K (52 aa).

The tract at residues 1 to 52 (MGKQAEFWSESKNNSKIDGQPKAKSRFASKRPNGTINTHPQERMRAANQQEE) is disordered.

It belongs to the SspK family.

It localises to the spore core. This Bacillus anthracis (strain A0248) protein is Small, acid-soluble spore protein K.